The following is a 315-amino-acid chain: ATP synthase gamma chain (315 aa).

Belongs to the ATPase gamma chain family. As to quaternary structure, F-type ATPases have 2 components, CF(1) - the catalytic core - and CF(0) - the membrane proton channel. CF(1) has five subunits: alpha(3), beta(3), gamma(1), delta(1), epsilon(1). CF(0) has three main subunits: a, b and c.

The protein localises to the cellular thylakoid membrane. Functionally, produces ATP from ADP in the presence of a proton gradient across the membrane. The gamma chain is believed to be important in regulating ATPase activity and the flow of protons through the CF(0) complex. In Cyanothece sp. (strain PCC 7425 / ATCC 29141), this protein is ATP synthase gamma chain.